A 354-amino-acid polypeptide reads, in one-letter code: Probable serine acetyltransferase 2 (354 aa).

This sequence belongs to the transferase hexapeptide repeat family. Homomultimer.

The enzyme catalyses L-serine + acetyl-CoA = O-acetyl-L-serine + CoA. Its pathway is amino-acid biosynthesis; L-cysteine biosynthesis; L-cysteine from L-serine: step 1/2. The sequence is that of Probable serine acetyltransferase 2 (SAT2) from Oryza sativa subsp. japonica (Rice).